A 523-amino-acid polypeptide reads, in one-letter code: 2-isopropylmalate synthase (523 aa).

The Pyruvate carboxyltransferase domain maps to 5–267; sequence VIIFDTTLRD…ETGINAKEIH (263 aa). Positions 14, 202, 204, and 238 each coordinate Mn(2+). The segment at 392–523 is regulatory domain; sequence KLAQLVVHSD…QKDRSELGGV (132 aa).

This sequence belongs to the alpha-IPM synthase/homocitrate synthase family. LeuA type 1 subfamily. As to quaternary structure, homodimer. Mn(2+) is required as a cofactor.

The protein resides in the cytoplasm. The enzyme catalyses 3-methyl-2-oxobutanoate + acetyl-CoA + H2O = (2S)-2-isopropylmalate + CoA + H(+). It functions in the pathway amino-acid biosynthesis; L-leucine biosynthesis; L-leucine from 3-methyl-2-oxobutanoate: step 1/4. Functionally, catalyzes the condensation of the acetyl group of acetyl-CoA with 3-methyl-2-oxobutanoate (2-ketoisovalerate) to form 3-carboxy-3-hydroxy-4-methylpentanoate (2-isopropylmalate). The chain is 2-isopropylmalate synthase from Shewanella sediminis (strain HAW-EB3).